A 274-amino-acid chain; its full sequence is 2,3,4,5-tetrahydropyridine-2,6-dicarboxylate N-succinyltransferase (274 aa).

Belongs to the transferase hexapeptide repeat family.

The protein localises to the cytoplasm. It carries out the reaction (S)-2,3,4,5-tetrahydrodipicolinate + succinyl-CoA + H2O = (S)-2-succinylamino-6-oxoheptanedioate + CoA. It functions in the pathway amino-acid biosynthesis; L-lysine biosynthesis via DAP pathway; LL-2,6-diaminopimelate from (S)-tetrahydrodipicolinate (succinylase route): step 1/3. The sequence is that of 2,3,4,5-tetrahydropyridine-2,6-dicarboxylate N-succinyltransferase from Erwinia tasmaniensis (strain DSM 17950 / CFBP 7177 / CIP 109463 / NCPPB 4357 / Et1/99).